The sequence spans 338 residues: Glycerol-3-phosphate dehydrogenase [NAD(P)+] (338 aa).

NADPH is bound by residues Ser12, Trp13, Arg33, and Lys110. Sn-glycerol 3-phosphate is bound by residues Lys110, Gly141, and Ser143. Ala145 contributes to the NADPH binding site. The sn-glycerol 3-phosphate site is built by Lys196, Asp249, Ser259, Arg260, and Asn261. Lys196 functions as the Proton acceptor in the catalytic mechanism. Arg260 contacts NADPH. Val284 and Glu286 together coordinate NADPH.

It belongs to the NAD-dependent glycerol-3-phosphate dehydrogenase family.

The protein localises to the cytoplasm. The enzyme catalyses sn-glycerol 3-phosphate + NAD(+) = dihydroxyacetone phosphate + NADH + H(+). It catalyses the reaction sn-glycerol 3-phosphate + NADP(+) = dihydroxyacetone phosphate + NADPH + H(+). It participates in membrane lipid metabolism; glycerophospholipid metabolism. Catalyzes the reduction of the glycolytic intermediate dihydroxyacetone phosphate (DHAP) to sn-glycerol 3-phosphate (G3P), the key precursor for phospholipid synthesis. The polypeptide is Glycerol-3-phosphate dehydrogenase [NAD(P)+] (Limosilactobacillus reuteri (strain DSM 20016) (Lactobacillus reuteri)).